The primary structure comprises 301 residues: HTH-type transcriptional regulator AbaB (301 aa).

The region spanning M1–T58 is the HTH lysR-type domain. The segment at residues F18–R37 is a DNA-binding region (H-T-H motif).

This sequence belongs to the LysR transcriptional regulatory family.

Its function is as follows. Putative regulator that may be involved in stimulating antibiotic production in S.antibioticus. The chain is HTH-type transcriptional regulator AbaB from Streptomyces antibioticus.